Consider the following 39-residue polypeptide: HLFQFREMIKEMTGKEPVVSYAFYGCYCGKGGRGKPDAT.

Ca(2+) is bound by residues Tyr-27, Gly-29, and Gly-31.

The protein belongs to the phospholipase A2 family. Group II subfamily. D49 sub-subfamily. The cofactor is Ca(2+). In terms of tissue distribution, expressed by the venom gland.

Its subcellular location is the secreted. The catalysed reaction is a 1,2-diacyl-sn-glycero-3-phosphocholine + H2O = a 1-acyl-sn-glycero-3-phosphocholine + a fatty acid + H(+). Its activity is regulated as follows. Is selectively inhibited by the gamma-phospholipase A2 inhibitor (PLI) CgMIP-I (AC P0DQP7) but not by the alpha-PLI CgMIP-II (AC P0DQP8). Snake venom phospholipase A2 (PLA2) that shows high myotoxic activities, induces mild edema, and shows cytolytic, and anti-coagulant activities, as well as intracerebral lethal effect. Does not induce lethality at a dose of 5 ug/g, when intravenously injected into mice. PLA2 catalyzes the calcium-dependent hydrolysis of the 2-acyl groups in 3-sn-phosphoglycerides. The protein is Basic phospholipase A2 of Cerrophidion godmani (Porthidium godmani).